A 312-amino-acid polypeptide reads, in one-letter code: Olfactory receptor 51B2 (312 aa).

Residues 1-23 (MWPNITAAPFLLTGFPGLEAAHH) are Extracellular-facing. Residue Asn-4 is glycosylated (N-linked (GlcNAc...) asparagine). The helical transmembrane segment at 24 to 44 (WISIPFFAVYVCILLGNGMLL) threads the bilayer. Residues 45–52 (YLIKHDHS) lie on the Cytoplasmic side of the membrane. A helical transmembrane segment spans residues 53 to 73 (LHEPMYYFLTMLAGTDLMVTL). At 74–97 (TTMPTVMGILWVNHREISSVGCFL) the chain is on the extracellular side. An intrachain disulfide couples Cys-95 to Cys-187. The helical transmembrane segment at 98-118 (QAYFIHSLSVVESGSLLAMAY) threads the bilayer. The Cytoplasmic segment spans residues 119–137 (DCFIAIRNPLRYASILTNT). A helical transmembrane segment spans residues 138 to 158 (RVIALGVGVFLRGFVSILPVI). Topologically, residues 159–194 (LRLFSFSYCKSHVITRAFCLHQEIMRLACADITFNR) are extracellular. A helical transmembrane segment spans residues 195–215 (LYPVILISLTIFLDCLIILFS). The Cytoplasmic segment spans residues 216 to 235 (YILILNTVIGIASGEERAKA). A helical membrane pass occupies residues 236–256 (LNTCISHISCVLIFYVTVMGL). The Extracellular segment spans residues 257–271 (TFIYRFGKNVPEVVH). Residues 272–292 (IIMSYIYFLFPPLMNPVIYSI) traverse the membrane as a helical segment. The Cytoplasmic segment spans residues 293 to 312 (KTKQIQYGIIRLLSKHRFSS).

The protein belongs to the G-protein coupled receptor 1 family. Post-translationally, ubiquitinated by the CRL2(FEM1A) and CRL2(FEM1C) complexes, which recognize the -Lys-Xaa-Xaa-Arg C-degron at the C-terminus, leading to its degradation.

Its subcellular location is the cell membrane. Functionally, odorant receptor. This chain is Olfactory receptor 51B2 (OR51B2), found in Homo sapiens (Human).